The following is a 428-amino-acid chain: MAFEFKLPDIGEGIHEGEIVKWFVKPGDEVNEDDVLCEVQNDKAVVEIPSPVKGKVLEILVPEGTVATVGQTLITLDAPGYENMTFKGQEQEEAKKEEKTETVSKEEKVDAVAPNAPAAEAEAGPNRRVIAMPSVRKYAREKGVDIRLVQGTGKNGRVLKEDIDAFLAGGAKPAPAAAEEKAAPAAAKPATTEGEFPETREKMSGIRRAIAKAMVHSKHTAPHVTLMDEADVTKLVAHRKKFKAIAAEKGIKLTFLPYVVKALVSALREYPVLNTSIDDETEEIIQKHYYNIGIAADTDRGLLVPVIKHADRKPIFALAQEINELAEKARDGKLTPGEMKGASCTITNIGSAGGQWFTPVINHPEVAILGIGRIAEKPIVRDGEIVAAPMLALSLSFDHRMIDGATAQKALNHIKRLLSDPELLLMEA.

The region spanning 2–77 (AFEFKLPDIG…TVGQTLITLD (76 aa)) is the Lipoyl-binding domain. Lys-43 bears the N6-lipoyllysine mark. A disordered region spans residues 88-123 (GQEQEEAKKEEKTETVSKEEKVDAVAPNAPAAEAEA). Over residues 89-110 (QEQEEAKKEEKTETVSKEEKVD) the composition is skewed to basic and acidic residues. Positions 111–123 (AVAPNAPAAEAEA) are enriched in low complexity. The region spanning 130–167 (IAMPSVRKYAREKGVDIRLVQGTGKNGRVLKEDIDAFL) is the Peripheral subunit-binding (PSBD) domain. The segment covering 177–194 (AAEEKAAPAAAKPATTEG) has biased composition (low complexity). The tract at residues 177 to 201 (AAEEKAAPAAAKPATTEGEFPETRE) is disordered. The active site involves His-399.

This sequence belongs to the 2-oxoacid dehydrogenase family. In terms of assembly, forms a 60-polypeptide structural core with icosahedral symmetry. It depends on (R)-lipoate as a cofactor.

The catalysed reaction is N(6)-[(R)-dihydrolipoyl]-L-lysyl-[protein] + acetyl-CoA = N(6)-[(R)-S(8)-acetyldihydrolipoyl]-L-lysyl-[protein] + CoA. In terms of biological role, the pyruvate dehydrogenase complex catalyzes the overall conversion of pyruvate to acetyl-CoA and CO(2). It contains multiple copies of three enzymatic components: pyruvate dehydrogenase (E1), dihydrolipoamide acetyltransferase (E2) and lipoamide dehydrogenase (E3). This chain is Dihydrolipoyllysine-residue acetyltransferase component of pyruvate dehydrogenase complex (pdhC), found in Geobacillus stearothermophilus (Bacillus stearothermophilus).